Consider the following 204-residue polypeptide: Peptide deformylase (204 aa).

Cys131 and His174 together coordinate Fe cation. Glu175 is an active-site residue. His178 is a Fe cation binding site.

The protein belongs to the polypeptide deformylase family. It depends on Fe(2+) as a cofactor.

The enzyme catalyses N-terminal N-formyl-L-methionyl-[peptide] + H2O = N-terminal L-methionyl-[peptide] + formate. Its function is as follows. Removes the formyl group from the N-terminal Met of newly synthesized proteins. Requires at least a dipeptide for an efficient rate of reaction. N-terminal L-methionine is a prerequisite for activity but the enzyme has broad specificity at other positions. This chain is Peptide deformylase, found in Streptococcus thermophilus (strain CNRZ 1066).